A 333-amino-acid chain; its full sequence is Cell shape-determining protein Mbl (333 aa).

Residues 12-14 (TAN), 156-158 (GGT), 204-207 (EDIK), and 284-287 (GGAL) contribute to the ATP site.

Belongs to the FtsA/MreB family. As to quaternary structure, forms polymers. Forms a complex with MreB and MreBH. Interacts with MreC.

It localises to the cytoplasm. Functionally, forms membrane-associated dynamic filaments that are essential for cell shape determination. Acts by regulating cell wall synthesis and cell elongation, and thus cell shape. A feedback loop between cell geometry and Mbl localization may maintain elongated cell shape by targeting cell wall growth to regions of negative cell wall curvature. Filaments rotate around the cell circumference in concert with the cell wall synthesis enzymes. The process is driven by the cell wall synthesis machinery and does not depend on Mbl polymerization. Organizes peptidoglycan synthesis in the lateral cell wall. Also required for proper chromosome segregation. This is Cell shape-determining protein Mbl (mbl) from Bacillus subtilis (strain 168).